The following is a 662-amino-acid chain: Transketolase (662 aa).

H28 serves as a coordination point for substrate. Thiamine diphosphate is bound by residues H68 and 115-117; that span reads GPL. Mg(2+) is bound at residue D156. Thiamine diphosphate contacts are provided by G157 and N186. Mg(2+) contacts are provided by N186 and I188. Substrate contacts are provided by H261, R356, and S383. H261 serves as a coordination point for thiamine diphosphate. Catalysis depends on E410, which acts as the Proton donor. F436 provides a ligand contact to thiamine diphosphate. Residues H460, D468, and R519 each contribute to the substrate site.

Belongs to the transketolase family. In terms of assembly, homodimer. Requires Mg(2+) as cofactor. Ca(2+) serves as cofactor. It depends on Mn(2+) as a cofactor. Co(2+) is required as a cofactor. The cofactor is thiamine diphosphate.

The catalysed reaction is D-sedoheptulose 7-phosphate + D-glyceraldehyde 3-phosphate = aldehydo-D-ribose 5-phosphate + D-xylulose 5-phosphate. The protein operates within carbohydrate biosynthesis; Calvin cycle. It participates in carbohydrate degradation; pentose phosphate pathway. Functionally, catalyzes the transfer of a two-carbon ketol group from a ketose donor to an aldose acceptor, via a covalent intermediate with the cofactor thiamine pyrophosphate. This is Transketolase (tkt) from Staphylococcus epidermidis (strain ATCC 35984 / DSM 28319 / BCRC 17069 / CCUG 31568 / BM 3577 / RP62A).